A 926-amino-acid chain; its full sequence is MKKTRSTTLRRAWPSSDFSDRASDRMRSRSEKDYRLHKRFPAAFAPQASRGYMTSGDVSPISMSPISQSQFIPLGEILCLAISAMNSARKPVTQEALMEHLTTCFPGVPTPSQEILRHTLNTLVRERKIYPTPDGYFIVTPQTYFITPSLIRTNSKWYHLDERIPDRSQCTSPQPGTITPSASGCVRERTLPRNHCDSCHCCREDVHSTHAPTLQRKSAKDCKDPYCPPSLCQVPPTEKSKSTVNFSYKTETLSKPKDSEKQSKKFGLKLFRLSFKKDKTKQLANFSAQFPPEEWPLRDEDTPATIPREVEMEIIRRINPDLTVENVMRHTALMKKLEEEKAQRSKAGSSAHHSGRSKKSRTHRKSHGKSRSHSKTRVSKGDPSDGSHLDIPAEREYDFCDPLTRVPREGCFIIEHKGDNFIMHSNTNVLESHFPMTPEWDVSGELAKRRTEMPFPEPSRGSSHSKVHRSHSHTQDRRSRNERSNKAKERSRSMDNSKGPLGASSLGTPEDLAEGCSQDDQTPSQSYIDDSTLRPAQTVSLQRAHISSTSYKEVCIPEIVSGSKEPSSACSLLEPGKPPESLPSYGELNSCPTKTATDDYFQCNTSSETVLTAPSPLGKNKEDHDTLTLAEGVKKLSPSDRQVPHSSREPVGHKEESPKGPGGGPAASGGVAEGIANGRLVQHHGAEPSSLDKRKEIFSKDTLFKPLHSTLSVNSYHKSSLSLLKSHPKTPADTLPGRCEKLEPSLGTSAAQAMPASQRQQESGGNQEASFDYYNVSDDDDSEEGANKNTEEEKNREDVGTMQWLLEREKERDLQRKFEKNLTLLAPKETDSSSNQRATHSARLDSMDSSSITVDSGFNSPRTRESLASNTSSIVESNRRQNPALSPAHGGAGPAFNFRASAEPPTNEAEKLQKPSNCLQASVTSV.

Disordered regions lie at residues 1–32 (MKKT…RSEK), 338–391 (EEEK…HLDI), 452–529 (EMPF…SYID), 564–588 (KEPS…YGEL), 632–672 (GVKK…GGVA), 724–803 (LKSH…GTMQ), and 825–926 (LAPK…VTSV). Basic and acidic residues predominate over residues 18–32 (FSDRASDRMRSRSEK). The span at 353-378 (HSGRSKKSRTHRKSHGKSRSHSKTRV) shows a compositional bias: basic residues. Residues 379–391 (SKGDPSDGSHLDI) are compositionally biased toward basic and acidic residues. Basic residues predominate over residues 463 to 472 (SHSKVHRSHS). Residues 473 to 495 (HTQDRRSRNERSNKAKERSRSMD) show a composition bias toward basic and acidic residues. Polar residues predominate over residues 518-529 (QDDQTPSQSYID). Residues 632–658 (GVKKLSPSDRQVPHSSREPVGHKEESP) are compositionally biased toward basic and acidic residues. A compositionally biased stretch (polar residues) spans 746–769 (LGTSAAQAMPASQRQQESGGNQEA). The span at 785 to 799 (GANKNTEEEKNREDV) shows a compositional bias: basic and acidic residues. Composition is skewed to polar residues over residues 847 to 884 (MDSS…QNPA) and 914 to 926 (KPSN…VTSV).

The polypeptide is Storkhead-box protein 2 (STOX2) (Homo sapiens (Human)).